A 225-amino-acid polypeptide reads, in one-letter code: Octanoyltransferase (225 aa).

The BPL/LPL catalytic domain maps to 29 to 210; that stretch reads PDTDDEIWVV…RLIAHLDGAT (182 aa). Substrate contacts are provided by residues 69–76, 141–143, and 154–156; these read RGGQITYH, ALG, and GLS. Residue Cys-172 is the Acyl-thioester intermediate of the active site.

The protein belongs to the LipB family.

Its subcellular location is the cytoplasm. The enzyme catalyses octanoyl-[ACP] + L-lysyl-[protein] = N(6)-octanoyl-L-lysyl-[protein] + holo-[ACP] + H(+). It functions in the pathway protein modification; protein lipoylation via endogenous pathway; protein N(6)-(lipoyl)lysine from octanoyl-[acyl-carrier-protein]: step 1/2. Functionally, catalyzes the transfer of endogenously produced octanoic acid from octanoyl-acyl-carrier-protein onto the lipoyl domains of lipoate-dependent enzymes. Lipoyl-ACP can also act as a substrate although octanoyl-ACP is likely to be the physiological substrate. The protein is Octanoyltransferase of Burkholderia pseudomallei (strain K96243).